We begin with the raw amino-acid sequence, 599 residues long: Stromal 70 kDa heat shock-related protein, chloroplastic (599 aa).

The disordered stretch occupies residues 545–573 (NQPGAGGEPGAAQAQHQEQSSARQIQRAK). The segment covering 554-568 (GAAQAQHQEQSSARQ) has biased composition (low complexity).

The protein belongs to the heat shock protein 70 family.

It localises to the plastid. The protein localises to the chloroplast stroma. In terms of biological role, interacts with newly imported chloroplast proteins to assist in their maturation. The polypeptide is Stromal 70 kDa heat shock-related protein, chloroplastic (CHSP70) (Spinacia oleracea (Spinach)).